Consider the following 252-residue polypeptide: Imidazole glycerol phosphate synthase subunit HisF (252 aa).

Residues aspartate 11 and aspartate 130 contribute to the active site.

The protein belongs to the HisA/HisF family. As to quaternary structure, heterodimer of HisH and HisF.

It localises to the cytoplasm. It catalyses the reaction 5-[(5-phospho-1-deoxy-D-ribulos-1-ylimino)methylamino]-1-(5-phospho-beta-D-ribosyl)imidazole-4-carboxamide + L-glutamine = D-erythro-1-(imidazol-4-yl)glycerol 3-phosphate + 5-amino-1-(5-phospho-beta-D-ribosyl)imidazole-4-carboxamide + L-glutamate + H(+). The protein operates within amino-acid biosynthesis; L-histidine biosynthesis; L-histidine from 5-phospho-alpha-D-ribose 1-diphosphate: step 5/9. Its function is as follows. IGPS catalyzes the conversion of PRFAR and glutamine to IGP, AICAR and glutamate. The HisF subunit catalyzes the cyclization activity that produces IGP and AICAR from PRFAR using the ammonia provided by the HisH subunit. The protein is Imidazole glycerol phosphate synthase subunit HisF of Polynucleobacter necessarius subsp. necessarius (strain STIR1).